Here is a 513-residue protein sequence, read N- to C-terminus: Teichoic acid ribitol-phosphate polymerase TarK (513 aa).

This sequence belongs to the CDP-glycerol glycerophosphotransferase family.

The protein resides in the cell membrane. It catalyses the reaction 4-O-[di(2R)-glycerylphospho]-N-acetyl-beta-D-mannosaminyl-(1-&gt;4)-N-acetyl-alpha-D-glucosaminyl di-trans,octa-cis-undecaprenyl diphosphate + n CDP-L-ribitol = 4-O-[(D-ribitylphospho)(n)-di{(2R)-glycerylphospho}]-N-acetyl-beta-D-mannosaminyl-(1-&gt;4)-N-acetyl-alpha-D-glucosaminyl di-trans,octa-cis-undecaprenyl diphosphate + n CMP + n H(+). Its pathway is cell wall biogenesis; poly(ribitol phosphate) teichoic acid biosynthesis. Can catalyze the polymerization of the main chain of the major teichoic acid by sequential transfer of ribitol phosphate units from CDP-ribitol to the second glycerol phosphate attached to the disaccharide linkage unit. This Staphylococcus aureus (strain NCTC 8325 / PS 47) protein is Teichoic acid ribitol-phosphate polymerase TarK (tarK).